We begin with the raw amino-acid sequence, 192 residues long: ATP synthase subunit b 2 (192 aa).

The helical transmembrane segment at 39 to 59 (SGFLAQLIWLALAFGLLYYLM) threads the bilayer.

The protein belongs to the ATPase B chain family. As to quaternary structure, F-type ATPases have 2 components, F(1) - the catalytic core - and F(0) - the membrane proton channel. F(1) has five subunits: alpha(3), beta(3), gamma(1), delta(1), epsilon(1). F(0) has three main subunits: a(1), b(2) and c(10-14). The alpha and beta chains form an alternating ring which encloses part of the gamma chain. F(1) is attached to F(0) by a central stalk formed by the gamma and epsilon chains, while a peripheral stalk is formed by the delta and b chains.

Its subcellular location is the cell inner membrane. Its function is as follows. F(1)F(0) ATP synthase produces ATP from ADP in the presence of a proton or sodium gradient. F-type ATPases consist of two structural domains, F(1) containing the extramembraneous catalytic core and F(0) containing the membrane proton channel, linked together by a central stalk and a peripheral stalk. During catalysis, ATP synthesis in the catalytic domain of F(1) is coupled via a rotary mechanism of the central stalk subunits to proton translocation. In terms of biological role, component of the F(0) channel, it forms part of the peripheral stalk, linking F(1) to F(0). The b'-subunit is a diverged and duplicated form of b found in plants and photosynthetic bacteria. In Methylobacterium radiotolerans (strain ATCC 27329 / DSM 1819 / JCM 2831 / NBRC 15690 / NCIMB 10815 / 0-1), this protein is ATP synthase subunit b 2 (atpF2).